We begin with the raw amino-acid sequence, 636 residues long: Topoisomerase I damage affected protein 7 (636 aa).

A compositionally biased stretch (polar residues) spans 1–18 (MNSNSTIGRTTLGESDTI). Disordered regions lie at residues 1–33 (MNSN…NSRS), 87–109 (TLVS…QYDP), 238–271 (ISSP…SSTN), 299–326 (PTSS…DDTT), and 339–362 (QSTT…STSP). Residue Asn4 is glycosylated (N-linked (GlcNAc...) asparagine). Low complexity-rich tracts occupy residues 19–33 (SLSF…NSRS) and 87–108 (TLVS…SQYD). Residue Asn257 is glycosylated (N-linked (GlcNAc...) asparagine). Residues 457–477 (IVGSVVGSVGGILICVLVVWF) traverse the membrane as a helical segment. An N-linked (GlcNAc...) asparagine glycan is attached at Asn492. A compositionally biased stretch (polar residues) spans 510-541 (QAKEASLQAQDSGSQQRNTETASANNPFSNEF). Positions 510-551 (QAKEASLQAQDSGSQQRNTETASANNPFSNEFNFKARGNPPP) are disordered. A Glycyl lysine isopeptide (Lys-Gly) (interchain with G-Cter in ubiquitin) cross-link involves residue Lys512. N-linked (GlcNAc...) asparagine glycosylation is found at Asn557, Asn562, and Asn626. At Ser628 the chain carries Phosphoserine.

The protein belongs to the TDA7 family.

Its subcellular location is the vacuole membrane. This is Topoisomerase I damage affected protein 7 (TDA7) from Saccharomyces cerevisiae (strain YJM789) (Baker's yeast).